The primary structure comprises 561 residues: Potassium-transporting ATPase potassium-binding subunit (561 aa).

12 helical membrane-spanning segments follow: residues L5–V25, Y60–L80, V86–I106, V130–L150, I177–S197, P247–T267, L281–A301, F324–V344, G376–G396, A415–L435, I491–L511, and G533–L553.

This sequence belongs to the KdpA family. The system is composed of three essential subunits: KdpA, KdpB and KdpC.

The protein localises to the cell membrane. Its function is as follows. Part of the high-affinity ATP-driven potassium transport (or Kdp) system, which catalyzes the hydrolysis of ATP coupled with the electrogenic transport of potassium into the cytoplasm. This subunit binds the extracellular potassium ions and delivers the ions to the membrane domain of KdpB through an intramembrane tunnel. The chain is Potassium-transporting ATPase potassium-binding subunit from Rhodococcus erythropolis (strain PR4 / NBRC 100887).